Reading from the N-terminus, the 144-residue chain is 3-dehydroquinate dehydratase (144 aa).

Catalysis depends on tyrosine 23, which acts as the Proton acceptor. Substrate is bound by residues asparagine 74, histidine 80, and aspartate 87. The active-site Proton donor is histidine 101. Substrate-binding positions include 102 to 103 (LS) and arginine 112.

Belongs to the type-II 3-dehydroquinase family. Homododecamer.

The catalysed reaction is 3-dehydroquinate = 3-dehydroshikimate + H2O. Its pathway is metabolic intermediate biosynthesis; chorismate biosynthesis; chorismate from D-erythrose 4-phosphate and phosphoenolpyruvate: step 3/7. Functionally, catalyzes a trans-dehydration via an enolate intermediate. The polypeptide is 3-dehydroquinate dehydratase (Mesorhizobium japonicum (strain LMG 29417 / CECT 9101 / MAFF 303099) (Mesorhizobium loti (strain MAFF 303099))).